We begin with the raw amino-acid sequence, 123 residues long: DNA-directed RNA polymerase subunit omega (123 aa).

Residues 67–123 form a disordered region; that stretch reads EESAADSLSLGGFSTADVEAEVGGGPVQPDPGASQERAFDEAADGTAQGSGDPDPTT.

It belongs to the RNA polymerase subunit omega family. As to quaternary structure, the RNAP catalytic core consists of 2 alpha, 1 beta, 1 beta' and 1 omega subunit. When a sigma factor is associated with the core the holoenzyme is formed, which can initiate transcription.

It carries out the reaction RNA(n) + a ribonucleoside 5'-triphosphate = RNA(n+1) + diphosphate. Functionally, promotes RNA polymerase assembly. Latches the N- and C-terminal regions of the beta' subunit thereby facilitating its interaction with the beta and alpha subunits. This chain is DNA-directed RNA polymerase subunit omega, found in Halorhodospira halophila (strain DSM 244 / SL1) (Ectothiorhodospira halophila (strain DSM 244 / SL1)).